Reading from the N-terminus, the 341-residue chain is DER1-like family member protein 1 (341 aa).

The Cytoplasmic segment spans residues 1–41 (MAGPRNVRTLHGNGGRNNDVMGPKEFWLNIPPITRTLFTLA). The chain crosses the membrane as a helical span at residues 42–62 (IVMTIVGRLNLINPWYFIYVW). Residues 63–122 (NLTFKKVQIWRLLTSCVMLSSRAMPALMELYSIYDRSSQLERGHFGPGLSNRRGPMVTVD) lie on the Lumenal side of the membrane. The helical transmembrane segment at 123-143 (YAYYLCFCILAITTATTIIYG) threads the bilayer. Residues 144–170 (SYYPVVLTSGFISCITYTWSIDNANVQ) lie on the Cytoplasmic side of the membrane. The chain crosses the membrane as a helical span at residues 171–191 (IMFYGLIPVWGKYFPLIQLFI). Position 192 (Ser192) is a topological domain, lumenal. A helical transmembrane segment spans residues 193-213 (FVFNEGDFVISLIGFTTGYLY). Over 214–341 (TCLDTHTLGP…GQTNSPSDSQ (128 aa)) the chain is Cytoplasmic. 2 stretches are compositionally biased toward polar residues: residues 276–286 (SSQRETRTFSG) and 296–341 (ATLS…SDSQ). The disordered stretch occupies residues 276–341 (SSQRETRTFS…GQTNSPSDSQ (66 aa)).

The protein belongs to the derlin family.

It localises to the endoplasmic reticulum membrane. May be involved in the degradation process of some misfolded endoplasmic reticulum (ER) luminal proteins. Its precise role is however unclear and its inability to complement der1 mutations, suggests either that it is not involved in degradation process of misfolded proteins, or that it participates in the destruction of specific misfolded ER luminal proteins. This is DER1-like family member protein 1 (DFM1) from Saccharomyces cerevisiae (strain ATCC 204508 / S288c) (Baker's yeast).